The chain runs to 439 residues: Xaa-Pro dipeptidase (439 aa).

Mn(2+)-binding residues include Asp-244, Asp-255, His-335, Glu-380, and Glu-418.

It belongs to the peptidase M24B family. Bacterial-type prolidase subfamily. It depends on Mn(2+) as a cofactor.

It carries out the reaction Xaa-L-Pro dipeptide + H2O = an L-alpha-amino acid + L-proline. Functionally, splits dipeptides with a prolyl residue in the C-terminal position. This Shewanella frigidimarina (strain NCIMB 400) protein is Xaa-Pro dipeptidase.